The primary structure comprises 571 residues: Carboxylesterase 3B (571 aa).

The N-terminal stretch at 1-31 is a signal peptide; sequence MTNMRTMIPAGSSVLVWVTCLLLAFVTTVTG. A disulfide bridge connects residues cysteine 100 and cysteine 127. Catalysis depends on serine 232, which acts as the Acyl-ester intermediate. An intrachain disulfide couples cysteine 284 to cysteine 295. N-linked (GlcNAc...) asparagine glycosylation occurs at asparagine 311. Residues glutamate 347 and histidine 460 each act as charge relay system in the active site. Residues 568 to 571 carry the Prevents secretion from ER motif; it reads PEEL.

This sequence belongs to the type-B carboxylesterase/lipase family.

Its subcellular location is the endoplasmic reticulum lumen. It catalyses the reaction a carboxylic ester + H2O = an alcohol + a carboxylate + H(+). Involved in the detoxification of xenobiotics and in the activation of ester and amide prodrugs. This chain is Carboxylesterase 3B (Ces3b), found in Mus musculus (Mouse).